The following is a 643-amino-acid chain: Threonine--tRNA ligase (643 aa).

The TGS domain occupies 1–65 (MIHITLPDGS…NKDMPLSIVT (65 aa)). A catalytic region spans residues 246–537 (DHRKLGRELD…LIEQHAGAMP (292 aa)). Residues C337, H388, and H514 each coordinate Zn(2+).

It belongs to the class-II aminoacyl-tRNA synthetase family. Homodimer. The cofactor is Zn(2+).

It is found in the cytoplasm. It carries out the reaction tRNA(Thr) + L-threonine + ATP = L-threonyl-tRNA(Thr) + AMP + diphosphate + H(+). In terms of biological role, catalyzes the attachment of threonine to tRNA(Thr) in a two-step reaction: L-threonine is first activated by ATP to form Thr-AMP and then transferred to the acceptor end of tRNA(Thr). Also edits incorrectly charged L-seryl-tRNA(Thr). In Delftia acidovorans (strain DSM 14801 / SPH-1), this protein is Threonine--tRNA ligase.